Here is a 311-residue protein sequence, read N- to C-terminus: MAHTNESMVSEFVLLGLSNSWGLQLFFFAIFSIVYVTSVLGNVLIIVIISFDSHLNSPMYFLLSNLSFIDICQSNFATPKMLVDFFIERKTISFEGCMAQIFVLHSFVGSEMMLLVAMAYDRFIAICKPLHYSTIMNRRLCVIFVSISWAVGVLHSVSHLAFTVDLPFCGPNEVDSFFCDLPLVIELACMDTYEMEIMTLTNSGLISLSCFLALIISYTIILIGVRCRSSSGSSKALSTLTAHITVVILFFGPCIYFYIWPFSRLPVDKFLSVFYTVCTPLLNPIIYSLRNEDVKAAMWKLRNRHVNSWKN.

At 1-25 (MAHTNESMVSEFVLLGLSNSWGLQL) the chain is on the extracellular side. The N-linked (GlcNAc...) asparagine glycan is linked to N5. The chain crosses the membrane as a helical span at residues 26-49 (FFFAIFSIVYVTSVLGNVLIIVII). At 50–57 (SFDSHLNS) the chain is on the cytoplasmic side. Residues 58–79 (PMYFLLSNLSFIDICQSNFATP) form a helical membrane-spanning segment. The Extracellular portion of the chain corresponds to 80–100 (KMLVDFFIERKTISFEGCMAQ). C97 and C189 are disulfide-bonded. A helical transmembrane segment spans residues 101 to 120 (IFVLHSFVGSEMMLLVAMAY). The Cytoplasmic segment spans residues 121–139 (DRFIAICKPLHYSTIMNRR). The helical transmembrane segment at 140-158 (LCVIFVSISWAVGVLHSVS) threads the bilayer. Over 159–195 (HLAFTVDLPFCGPNEVDSFFCDLPLVIELACMDTYEM) the chain is Extracellular. A helical transmembrane segment spans residues 196-219 (EIMTLTNSGLISLSCFLALIISYT). At 220–235 (IILIGVRCRSSSGSSK) the chain is on the cytoplasmic side. The helical transmembrane segment at 236-258 (ALSTLTAHITVVILFFGPCIYFY) threads the bilayer. At 259-269 (IWPFSRLPVDK) the chain is on the extracellular side. The chain crosses the membrane as a helical span at residues 270–289 (FLSVFYTVCTPLLNPIIYSL). The Cytoplasmic portion of the chain corresponds to 290–311 (RNEDVKAAMWKLRNRHVNSWKN).

This sequence belongs to the G-protein coupled receptor 1 family.

It localises to the cell membrane. In terms of biological role, odorant receptor. This Homo sapiens (Human) protein is Olfactory receptor 4K1 (OR4K1).